The primary structure comprises 450 residues: MNNQVDPIWQSRFIADKPREKDHRPPFRRDRGRILHSAAFRCLQAKTQIHAVGENDFYRTRLTHSLEVAQIGSSLVAQMRFSEAFTALAQQMQQDKTELQKTLKGLLPSNDLIESLCFAHDIGHPPFGHGGEVALNYMMREHGGFEGNAQTFRLLTKLEPYTPNAGMNLTRRTLLGIVKYPTILDISSAQYAKLAPELNADSRYVKMNGWRPGKGLFRDDLPMFEWLLEPLSVKDRDLFGQFKQVRSDPSQILKTKFKSLDCSLMELADDIAYGVHDLEDAIVVGMVNLHQWQSALTALKNCPSEWIQKHIDAITEKLFSDQHYLRKNAIGALVNYFITSVRWTLTDDFNEPLLRYNAQLPAEVEAVLQIFKAFVRDHVILNVDTQRIEYKGQRILTEMFQIFESDPERLLPRNTAKRWQQASKESKKRVICDYMAGMSDAYALRVYQQL.

Residues Arg-61–Asp-201 form the HD domain.

The protein belongs to the dGTPase family. Type 2 subfamily.

The chain is Deoxyguanosinetriphosphate triphosphohydrolase-like protein from Pasteurella multocida (strain Pm70).